Reading from the N-terminus, the 399-residue chain is Transferrin receptor subunit ESAG6 (399 aa).

The signal sequence occupies residues methionine 1–alanine 17. N-linked (GlcNAc...) asparagine glycans are attached at residues asparagine 26 and asparagine 110. Disulfide bonds link cysteine 34–cysteine 161, cysteine 84–cysteine 312, and cysteine 144–cysteine 215. 3 N-linked (GlcNAc...) asparagine glycosylation sites follow: asparagine 235, asparagine 250, and asparagine 360. Residue asparagine 376 is the site of GPI-anchor amidated asparagine attachment. A propeptide spans alanine 377–leucine 399 (removed in mature form).

Heterodimer composed of ESAG6 and ESAG7. In terms of processing, N-glycosylated. Glycosylation is dispensable for heterodimer formation and host transferrin binding.

The protein localises to the cell membrane. Its subcellular location is the flagellar pocket. In terms of biological role, transferrin receptor subunit involved in receptor-mediated acquisition of iron from the environment by binding host TF/transferrin. The chain is Transferrin receptor subunit ESAG6 from Trypanosoma brucei brucei.